Reading from the N-terminus, the 332-residue chain is Tetraacyldisaccharide 4'-kinase (332 aa).

Residue 53–60 participates in ATP binding; the sequence is SVGGNGKT.

This sequence belongs to the LpxK family.

The enzyme catalyses a lipid A disaccharide + ATP = a lipid IVA + ADP + H(+). The protein operates within glycolipid biosynthesis; lipid IV(A) biosynthesis; lipid IV(A) from (3R)-3-hydroxytetradecanoyl-[acyl-carrier-protein] and UDP-N-acetyl-alpha-D-glucosamine: step 6/6. In terms of biological role, transfers the gamma-phosphate of ATP to the 4'-position of a tetraacyldisaccharide 1-phosphate intermediate (termed DS-1-P) to form tetraacyldisaccharide 1,4'-bis-phosphate (lipid IVA). The protein is Tetraacyldisaccharide 4'-kinase of Haemophilus influenzae (strain 86-028NP).